The chain runs to 539 residues: GMP synthase [glutamine-hydrolyzing] (539 aa).

One can recognise a Glutamine amidotransferase type-1 domain in the interval 4–202 (KILILDFGSQ…VLDIAGAKPD (199 aa)). The active-site Nucleophile is the C81. Active-site residues include H176 and E178. A GMPS ATP-PPase domain is found at 203-395 (WIMRDHIEEA…LGLPAEMVYR (193 aa)). 230-236 (SGGVDSS) is a binding site for ATP.

Homodimer.

It catalyses the reaction XMP + L-glutamine + ATP + H2O = GMP + L-glutamate + AMP + diphosphate + 2 H(+). It participates in purine metabolism; GMP biosynthesis; GMP from XMP (L-Gln route): step 1/1. In terms of biological role, catalyzes the synthesis of GMP from XMP. This chain is GMP synthase [glutamine-hydrolyzing], found in Burkholderia pseudomallei (strain 1106a).